Reading from the N-terminus, the 508-residue chain is 3-octaprenyl-4-hydroxybenzoate carboxy-lyase (508 aa).

Asparagine 172 contributes to the Mn(2+) binding site. Prenylated FMN-binding positions include 175–177, 189–191, and 194–195; these read IYR, RWL, and RG. Residue glutamate 238 participates in Mn(2+) binding. Residue aspartate 287 is the Proton donor of the active site. Residues 483 to 508 are disordered; it reads GEYGIATPPPPPRHSPPSDERGHDDV. A compositionally biased stretch (basic and acidic residues) spans 498–508; sequence PPSDERGHDDV.

This sequence belongs to the UbiD family. Homohexamer. Prenylated FMN is required as a cofactor. Requires Mn(2+) as cofactor.

It localises to the cell membrane. It carries out the reaction a 4-hydroxy-3-(all-trans-polyprenyl)benzoate + H(+) = a 2-(all-trans-polyprenyl)phenol + CO2. It participates in cofactor biosynthesis; ubiquinone biosynthesis. Its function is as follows. Catalyzes the decarboxylation of 3-octaprenyl-4-hydroxy benzoate to 2-octaprenylphenol, an intermediate step in ubiquinone biosynthesis. This is 3-octaprenyl-4-hydroxybenzoate carboxy-lyase from Chromohalobacter salexigens (strain ATCC BAA-138 / DSM 3043 / CIP 106854 / NCIMB 13768 / 1H11).